Here is a 150-residue protein sequence, read N- to C-terminus: Calmodulin (150 aa).

4 EF-hand domains span residues 9–44, 45–80, 82–117, and 118–150; these read EQIA…LGQS, PTAA…KMKD, DNEE…LGER, and LSQE…ISSK. Residues Asp-22, Asp-24, Asp-26, Asn-28, Glu-33, Asp-58, Asp-60, Asn-62, Thr-64, Glu-69, Asp-95, Asp-97, Asn-99, Tyr-101, Glu-106, Asp-131, Asp-133, Asp-135, and Glu-142 each contribute to the Ca(2+) site.

The protein belongs to the calmodulin family. As to quaternary structure, interacts with rng2.

It is found in the cytoplasm. The protein resides in the cytoskeleton. It localises to the microtubule organizing center. The protein localises to the spindle pole body. Calmodulin mediates the control of a large number of enzymes, ion channels and other proteins by Ca(2+). Among the enzymes to be stimulated by the calmodulin-Ca(2+) complex are a number of protein kinases and phosphatases. The sequence is that of Calmodulin (cam1) from Schizosaccharomyces pombe (strain 972 / ATCC 24843) (Fission yeast).